The primary structure comprises 331 residues: Adenosine deaminase (331 aa).

Zn(2+) contacts are provided by histidine 12 and histidine 14. Substrate-binding residues include histidine 14, aspartate 16, and glycine 170. Histidine 197 is a Zn(2+) binding site. The active-site Proton donor is glutamate 200. Aspartate 278 serves as a coordination point for Zn(2+). Position 279 (aspartate 279) interacts with substrate.

It belongs to the metallo-dependent hydrolases superfamily. Adenosine and AMP deaminases family. Adenosine deaminase subfamily. The cofactor is Zn(2+).

It catalyses the reaction adenosine + H2O + H(+) = inosine + NH4(+). The catalysed reaction is 2'-deoxyadenosine + H2O + H(+) = 2'-deoxyinosine + NH4(+). Functionally, catalyzes the hydrolytic deamination of adenosine and 2-deoxyadenosine. This Shewanella baltica (strain OS185) protein is Adenosine deaminase.